We begin with the raw amino-acid sequence, 400 residues long: MRISYTPQQEELRRELRSYFATLMTPERREALSSVQGEYGVGNVYRETIAQMGRDGWLALGWPKEYGGQGRSAMDQLIFTDEAAIAGAPVPFLTINSVAPTIMAYGTDEQKRFFLPRIAAGDLHFSIGYSEPGAGTDLANLRTTAVRDGDDYVVNGQKMWTSLIQYADYVWLAVRTNPESSGAKKHRGISVLIVPTTAEGFSWTPVHTMAGPDTSATYYSDVRVPVANRVGEENAGWKLVTNQLNHERVALVSPAPIFGCLREVREWAQNTKDAGGTRLIDSEWVQLNLARVHAKAEVLKLINWELASSQSGPKDAGPSPADASAAKVFGTELATEAYRLLMEVLGTAATLRQNSPGALLRGRVERMHRACLILTFGGGTNEVQRDIIGMVALGLPRANR.

FAD contacts are provided by residues 127 to 130 (IGYS), threonine 136, and serine 162. Glutamate 247 serves as the catalytic Proton acceptor. 380–382 (TNE) is a binding site for FAD.

It belongs to the acyl-CoA dehydrogenase family. In terms of assembly, heterotetramer (dimer of heterodimers) composed of FadE26 and FadE27. The cofactor is FAD.

The catalysed reaction is (25S)-3-oxocholest-4-en-26-oyl-CoA + A = 3-oxo-cholest-4,24-dien-26-oyl-CoA + AH2. The protein operates within steroid metabolism; cholesterol degradation. Its activity is regulated as follows. Uncompetitively inhibited by high concentration of 3-OCS-CoA. Its function is as follows. Involved in the first cycle of side chain dehydrogenation in the beta-oxidation of cholesterol catabolism. It contributes partly to the virulence by increasing the efficiency of beta-oxidation. Catalyzes the dehydrogenation of acyl-CoA ester side chains of (25S)-3-oxo-cholest-4-en-26-oyl-CoA (3-OCS-CoA) to yield (24E)-3-oxo-cholest-4,24-dien-26-oyl-CoA. Also able to dehydrogenate steroyl-CoA such as 3-oxo-chol-4-en-24-oyl-CoA (3-OCO-CoA) as well as 3-oxo-4-pregnene-20-carboxyl-CoA (3-OPC-CoA). It dehydrogenates only (25S)-OCS-CoA diastereomer. The chain is Acyl-CoA dehydrogenase FadE26 (fadE26) from Mycobacterium tuberculosis (strain ATCC 25618 / H37Rv).